Here is a 646-residue protein sequence, read N- to C-terminus: Chaperone protein DnaK (646 aa).

The residue at position 197 (threonine 197) is a Phosphothreonine; by autocatalysis. The interval 599-646 (QQGAQAGADPNAGSSQGAQAGTDYGTSGPKTGTADDVDYEVVNDDNDK) is disordered. The segment covering 610-628 (AGSSQGAQAGTDYGTSGPK) has biased composition (polar residues). Over residues 633 to 646 (DDVDYEVVNDDNDK) the composition is skewed to acidic residues.

Belongs to the heat shock protein 70 family.

Functionally, acts as a chaperone. The protein is Chaperone protein DnaK of Treponema denticola (strain ATCC 35405 / DSM 14222 / CIP 103919 / JCM 8153 / KCTC 15104).